Here is a 660-residue protein sequence, read N- to C-terminus: Pro-secreted protein ORF2 (660 aa).

The signal sequence occupies residues 1–23; it reads MRPRAVLLLLFVLLPMLPAPPAG. Disordered stretches follow at residues 19 to 43 and 64 to 125; these read APPA…GFWG and ADVV…VPDV. A Nuclear localization signal motif is present at residues 28 to 33; the sequence is RRRGRR. Residues 93–124 show a composition bias toward low complexity; the sequence is RPSTAPRRRSAPAGAAPLTAVSPAPDTAPVPD. 2 N-linked (GlcNAc...) asparagine; by host glycosylation sites follow: Asn-137 and Asn-310. The tract at residues 368–394 is particle formation; that stretch reads IALTLFNLADTLLGGLPTELISSAGGQ. An N-linked (GlcNAc...) asparagine; by host glycan is attached at Asn-562. The segment at 585–610 is oligomerization; it reads TTSLGAGPTSISAVGVLAPHSALAVL.

It belongs to the hepevirus capsid protein family. Homodimer. As to quaternary structure, self-assembles to form the capsid. The capsid is dominated by dimers that define the 30 morphological units. Interacts with phosphorylated protein ORF3. Interacts with host TMEM134. Interacts with host ASGR1 and ASGR2; these interactions facilitate infection of host hepatocytes. Cleaved by host protease in the N-terminus. In terms of processing, N-glycosylated. Post-translationally, not N-glycosylated. The C-terminus of the capsid protein ORF2 is truncated in non-enveloped virions shedded in feces, probably due to host proteases.

Its subcellular location is the secreted. The protein localises to the virion. It localises to the host cytoplasm. The protein resides in the host endoplasmic reticulum. It is found in the host Golgi apparatus. Its subcellular location is the host cell surface. The protein localises to the host nucleus. Its function is as follows. Plays a role in the inhibition of host antibody-mediated neutralization without blocking viral cell entry. In terms of biological role, forms an icosahedral capsid with a T=1 symmetry and a 34 nm diameter. The capsid is composed of 60 copies linked to each other. Binds to the 5' end of the genomic RNA to mediate genome encapsidation. Binds to heparin surface proteoglycans (HSPGs) to mediate viral entry. Additionally, the interactions with host ASGR1 and ASGR2 facilitate viral infection of hepatocytes. Inhibits IFN production by blocking host TBK1-induced IRF3 phosphorylation. The nuclear form probably modulates host gene expression. The sequence is that of Pro-secreted protein ORF2 from Hepatitis E virus genotype 3 (isolate Swine/United States/swUS1) (HEV-3).